Consider the following 187-residue polypeptide: MSKSASRARLADIIRNRSFGRGEITLASGRKSDFYFNLKPTMLDPEGAALLAELTYEALRDEQVDFIGGLEMGAVPLAGAIAQLSWLKNHPIAAFFVRKKPKEHGAKLAIEGLAKGESLAGKRCVIVEDVTTTGGSAIKAVEAVRESGAEIVLVLTMVDREEGATEAFAEAGLPFRSLYKASEFLNR.

Residues R98, K99, K102, H104, and 128-136 contribute to the 5-phospho-alpha-D-ribose 1-diphosphate site; that span reads EDVTTTGGS. Orotate is bound by residues T132 and R160.

This sequence belongs to the purine/pyrimidine phosphoribosyltransferase family. PyrE subfamily. As to quaternary structure, homodimer. It depends on Mg(2+) as a cofactor.

It catalyses the reaction orotidine 5'-phosphate + diphosphate = orotate + 5-phospho-alpha-D-ribose 1-diphosphate. Its pathway is pyrimidine metabolism; UMP biosynthesis via de novo pathway; UMP from orotate: step 1/2. Catalyzes the transfer of a ribosyl phosphate group from 5-phosphoribose 1-diphosphate to orotate, leading to the formation of orotidine monophosphate (OMP). The protein is Orotate phosphoribosyltransferase of Rhodopseudomonas palustris (strain BisB5).